The primary structure comprises 443 residues: Chromosomal replication initiator protein DnaA (443 aa).

The interval M1–F67 is domain I, interacts with DnaA modulators. The segment at F67–G105 is domain II. The interval N106–A323 is domain III, AAA+ region. 4 residues coordinate ATP: G151, G153, K154, and T155. A domain IV, binds dsDNA region spans residues N324–E443.

Belongs to the DnaA family. In terms of assembly, oligomerizes as a right-handed, spiral filament on DNA at oriC.

It localises to the cytoplasm. In terms of biological role, plays an essential role in the initiation and regulation of chromosomal replication. ATP-DnaA binds to the origin of replication (oriC) to initiate formation of the DNA replication initiation complex once per cell cycle. Binds the DnaA box (a 9 base pair repeat at the origin) and separates the double-stranded (ds)DNA. Forms a right-handed helical filament on oriC DNA; dsDNA binds to the exterior of the filament while single-stranded (ss)DNA is stabiized in the filament's interior. The ATP-DnaA-oriC complex binds and stabilizes one strand of the AT-rich DNA unwinding element (DUE), permitting loading of DNA polymerase. After initiation quickly degrades to an ADP-DnaA complex that is not apt for DNA replication. Binds acidic phospholipids. The polypeptide is Chromosomal replication initiator protein DnaA (Stenotrophomonas maltophilia (strain K279a)).